Reading from the N-terminus, the 356-residue chain is UDP-N-acetylglucosamine--N-acetylmuramyl-(pentapeptide) pyrophosphoryl-undecaprenol N-acetylglucosamine transferase (356 aa).

UDP-N-acetyl-alpha-D-glucosamine-binding residues include arginine 166, serine 196, and glutamine 290.

Belongs to the glycosyltransferase 28 family. MurG subfamily.

It localises to the cell membrane. The enzyme catalyses Mur2Ac(oyl-L-Ala-gamma-D-Glu-L-Lys-D-Ala-D-Ala)-di-trans,octa-cis-undecaprenyl diphosphate + UDP-N-acetyl-alpha-D-glucosamine = beta-D-GlcNAc-(1-&gt;4)-Mur2Ac(oyl-L-Ala-gamma-D-Glu-L-Lys-D-Ala-D-Ala)-di-trans,octa-cis-undecaprenyl diphosphate + UDP + H(+). It participates in cell wall biogenesis; peptidoglycan biosynthesis. Cell wall formation. Catalyzes the transfer of a GlcNAc subunit on undecaprenyl-pyrophosphoryl-MurNAc-pentapeptide (lipid intermediate I) to form undecaprenyl-pyrophosphoryl-MurNAc-(pentapeptide)GlcNAc (lipid intermediate II). The sequence is that of UDP-N-acetylglucosamine--N-acetylmuramyl-(pentapeptide) pyrophosphoryl-undecaprenol N-acetylglucosamine transferase from Staphylococcus aureus (strain MRSA252).